Reading from the N-terminus, the 548-residue chain is Probable malate:quinone oxidoreductase (548 aa).

This sequence belongs to the MQO family. The cofactor is FAD.

The enzyme catalyses (S)-malate + a quinone = a quinol + oxaloacetate. Its pathway is carbohydrate metabolism; tricarboxylic acid cycle; oxaloacetate from (S)-malate (quinone route): step 1/1. The sequence is that of Probable malate:quinone oxidoreductase from Escherichia coli O127:H6 (strain E2348/69 / EPEC).